Reading from the N-terminus, the 228-residue chain is Prolactin (228 aa).

An N-terminal signal peptide occupies residues 1–29 (MCPKGSSVKGSLLLLLLMSSRFLFKAVES). C33 and C40 are oxidised to a cystine. A phosphoserine mark is found at S55, S63, and S119. 2 cysteine pairs are disulfide-bonded: C87–C203 and C220–C228.

It belongs to the somatotropin/prolactin family. Interacts with PRLR.

The protein localises to the secreted. In terms of biological role, prolactin acts primarily on the mammary gland by promoting lactation. The polypeptide is Prolactin (PRL) (Monodelphis domestica (Gray short-tailed opossum)).